The chain runs to 203 residues: Cell division protein SepF (203 aa).

2 disordered regions span residues 26 to 51 (DGELEQVQPAYQEEPPRRSAPERRGQ) and 167 to 203 (GTASGSQEGDLLARTARRSEEGDRTGADRSKFDWRNQ). Basic and acidic residues-rich tracts occupy residues 39 to 50 (EPPRRSAPERRG) and 183 to 203 (RRSEEGDRTGADRSKFDWRNQ).

The protein belongs to the SepF family. Homodimer. Interacts with FtsZ.

It localises to the cytoplasm. Its function is as follows. Cell division protein that is part of the divisome complex and is recruited early to the Z-ring. Probably stimulates Z-ring formation, perhaps through the cross-linking of FtsZ protofilaments. Its function overlaps with FtsA. This is Cell division protein SepF from Symbiobacterium thermophilum (strain DSM 24528 / JCM 14929 / IAM 14863 / T).